Consider the following 399-residue polypeptide: MGRAEKVVLAYSGGVDTSVCIPYLMHEWGVKEVITLAADLGQGEELGPIKQKALNSGAVVSLVEDGREEFITDYAFPAIKANALYENRYPLATALARPLIAKMLVRAAEKYGADAVAHGCTAKGNDQVRFDLGILAQNPEIKVLAPAREWGMSREEAITYGEQYGLTFPVKKSSPFSIDKNLLGRSIEAGPLEDPMCEPPEEVFEMVKAISDTPDEPEYLEIGFEKGVPVMVNGEALGPVALISKLNEIVGNHGIGRIDMIENRVVGIKSREIYESPAMCVLVDAHRDLESLTLTADVTQYKRGMEQTYSELIYRGLWFSPLKQAVDAFIEQTQERVTGVVRLKLHKGTARIVGRRSEKSIYTPDLATYGADDKFNHESAEGFIYIWGLPTRVWAQANK.

ATP contacts are provided by residues 10–18 (AYSGGVDTS) and A38. Residue Y89 coordinates L-citrulline. G119 contributes to the ATP binding site. Residues T121, N125, and D126 each coordinate L-aspartate. Position 125 (N125) interacts with L-citrulline. 5 residues coordinate L-citrulline: R129, S177, S186, E262, and Y274.

This sequence belongs to the argininosuccinate synthase family. Type 1 subfamily. In terms of assembly, homotetramer.

It is found in the cytoplasm. The catalysed reaction is L-citrulline + L-aspartate + ATP = 2-(N(omega)-L-arginino)succinate + AMP + diphosphate + H(+). The protein operates within amino-acid biosynthesis; L-arginine biosynthesis; L-arginine from L-ornithine and carbamoyl phosphate: step 2/3. This Picosynechococcus sp. (strain ATCC 27264 / PCC 7002 / PR-6) (Agmenellum quadruplicatum) protein is Argininosuccinate synthase.